The chain runs to 131 residues: Protein E11 homolog (131 aa).

It belongs to the chordopoxvirinae E11 family.

It localises to the virion. The protein is Protein E11 homolog of Fowlpox virus (strain NVSL) (FPV).